The sequence spans 263 residues: MITVNTLQKMKAAGEKIAMLTAYESSFAALMDDAGVEMLLVGDSLGMAVQGRKSTLPVSLRDMCYHTECVARGAKNAMIVSDLPFGAYQQSKEQAFAAAAELMAAGAHMVKLEGGVWMAETTEFLQMRGIPVCAHIGLTPQSVFAFGGYKVQGRGGKAQALLNDAKAHDDAGAAVVLMECVLAELAKKVTETVSCPTIGIGAGADCDGQVLVMHDMLGIFPGKTAKFVKNFMQGHDSVQAAVRAYVAEVKAKTFPAAEHIFAD.

Positions 43 and 82 each coordinate Mg(2+). 3-methyl-2-oxobutanoate contacts are provided by residues 43–44, Asp-82, and Lys-111; that span reads DS. A Mg(2+)-binding site is contributed by Glu-113. Catalysis depends on Glu-179, which acts as the Proton acceptor.

The protein belongs to the PanB family. In terms of assembly, homodecamer; pentamer of dimers. Mg(2+) serves as cofactor.

Its subcellular location is the cytoplasm. The enzyme catalyses 3-methyl-2-oxobutanoate + (6R)-5,10-methylene-5,6,7,8-tetrahydrofolate + H2O = 2-dehydropantoate + (6S)-5,6,7,8-tetrahydrofolate. Its pathway is cofactor biosynthesis; (R)-pantothenate biosynthesis; (R)-pantoate from 3-methyl-2-oxobutanoate: step 1/2. Catalyzes the reversible reaction in which hydroxymethyl group from 5,10-methylenetetrahydrofolate is transferred onto alpha-ketoisovalerate to form ketopantoate. The sequence is that of 3-methyl-2-oxobutanoate hydroxymethyltransferase from Neisseria meningitidis serogroup B (strain ATCC BAA-335 / MC58).